Here is a 290-residue protein sequence, read N- to C-terminus: ATP synthase gamma chain (290 aa).

It belongs to the ATPase gamma chain family. In terms of assembly, F-type ATPases have 2 components, CF(1) - the catalytic core - and CF(0) - the membrane proton channel. CF(1) has five subunits: alpha(3), beta(3), gamma(1), delta(1), epsilon(1). CF(0) has three main subunits: a, b and c.

It is found in the cell membrane. Produces ATP from ADP in the presence of a proton gradient across the membrane. The gamma chain is believed to be important in regulating ATPase activity and the flow of protons through the CF(0) complex. The polypeptide is ATP synthase gamma chain (Buchnera aphidicola subsp. Acyrthosiphon pisum (strain 5A)).